The following is a 204-amino-acid chain: FMN-dependent NADH:quinone oxidoreductase (204 aa).

FMN contacts are provided by residues serine 10 and 15–17 (SLS).

Belongs to the azoreductase type 1 family. As to quaternary structure, homodimer. FMN serves as cofactor.

The catalysed reaction is 2 a quinone + NADH + H(+) = 2 a 1,4-benzosemiquinone + NAD(+). The enzyme catalyses N,N-dimethyl-1,4-phenylenediamine + anthranilate + 2 NAD(+) = 2-(4-dimethylaminophenyl)diazenylbenzoate + 2 NADH + 2 H(+). Quinone reductase that provides resistance to thiol-specific stress caused by electrophilic quinones. Functionally, also exhibits azoreductase activity. Catalyzes the reductive cleavage of the azo bond in aromatic azo compounds to the corresponding amines. The chain is FMN-dependent NADH:quinone oxidoreductase from Rhizobium johnstonii (strain DSM 114642 / LMG 32736 / 3841) (Rhizobium leguminosarum bv. viciae).